The sequence spans 269 residues: Tryptophan synthase alpha chain (269 aa).

Active-site proton acceptor residues include E49 and D60.

Belongs to the TrpA family. As to quaternary structure, tetramer of two alpha and two beta chains.

It catalyses the reaction (1S,2R)-1-C-(indol-3-yl)glycerol 3-phosphate + L-serine = D-glyceraldehyde 3-phosphate + L-tryptophan + H2O. The protein operates within amino-acid biosynthesis; L-tryptophan biosynthesis; L-tryptophan from chorismate: step 5/5. The alpha subunit is responsible for the aldol cleavage of indoleglycerol phosphate to indole and glyceraldehyde 3-phosphate. This chain is Tryptophan synthase alpha chain, found in Acidovorax sp. (strain JS42).